The following is a 468-amino-acid chain: Chromosomal replication initiator protein DnaA (468 aa).

The tract at residues 1 to 84 is domain I, interacts with DnaA modulators; that stretch reads MSSSLWLQCL…RFEVGSKPIS (84 aa). Positions 84 to 131 are domain II; sequence SAPPRPQRTAADVAAATSAPAQMQARQSLHKPWESRGPEPVDDLNHRS. Residues 112-132 are disordered; it reads LHKPWESRGPEPVDDLNHRSN. A compositionally biased stretch (basic and acidic residues) spans 114-129; the sequence is KPWESRGPEPVDDLNH. The interval 132–348 is domain III, AAA+ region; the sequence is NVNPKHKFTN…GALNRVVANA (217 aa). ATP-binding residues include glycine 176, glycine 178, lysine 179, and threonine 180. Residues 349–468 are domain IV, binds dsDNA; it reads NFTGRAITID…YSNLIRTLSS (120 aa).

The protein belongs to the DnaA family. Oligomerizes as a right-handed, spiral filament on DNA at oriC.

It localises to the cytoplasm. In terms of biological role, plays an essential role in the initiation and regulation of chromosomal replication. ATP-DnaA binds to the origin of replication (oriC) to initiate formation of the DNA replication initiation complex once per cell cycle. Binds the DnaA box (a 9 base pair repeat at the origin) and separates the double-stranded (ds)DNA. Forms a right-handed helical filament on oriC DNA; dsDNA binds to the exterior of the filament while single-stranded (ss)DNA is stabiized in the filament's interior. The ATP-DnaA-oriC complex binds and stabilizes one strand of the AT-rich DNA unwinding element (DUE), permitting loading of DNA polymerase. After initiation quickly degrades to an ADP-DnaA complex that is not apt for DNA replication. Binds acidic phospholipids. The chain is Chromosomal replication initiator protein DnaA from Aliivibrio salmonicida (strain LFI1238) (Vibrio salmonicida (strain LFI1238)).